The primary structure comprises 557 residues: Tektin-5 (557 aa).

The stretch at 302-386 (DNIRHAQNMR…LLERAIVAKE (85 aa)) forms a coiled coil. A run of 6 repeats spans residues 507 to 512 (CSGSAL), 513 to 518 (CKGPAS), 519 to 524 (CGGGAS), 525 to 530 (CGGGAS), 531 to 536 (CGGHAP), and 537 to 541 (CGSAL). The segment at 507 to 541 (CSGSALCKGPASCGGGASCGGGASCGGHAPCGSAL) is 6 X 6 AA approximate tandem repeats of C-[GSK]-G-[GSPH]-A-[SLP].

The protein belongs to the tektin family. Microtubule inner protein component of sperm flagellar doublet microtubules. Interacts with TEKT3. In terms of processing, ubiquitinated, leading to its degradation. Deubiquitinated by USP16, promoting its stability. Strongly expressed in germ cells of the testis (at protein level). Expressed in spermatozoa. Also detected in brain.

The protein resides in the cytoplasm. It is found in the cytoskeleton. The protein localises to the flagellum axoneme. Its function is as follows. Sperm-specific microtubule inner protein (MIP) part of the dynein-decorated doublet microtubules (DMTs) in flagellar axoneme. Forms an extensive interaction network in different conformations that reinforces the helix bundle composed by other tektin proteins (TEKT1 to TEKT4) and MIPs to anchor the tektin bundle onto the tubulin wall of A-tubule of the sperm flagellum. The chain is Tektin-5 from Mus musculus (Mouse).